The sequence spans 417 residues: 4-hydroxy-3-methylbut-2-en-1-yl diphosphate synthase (flavodoxin) (417 aa).

Positions 304, 307, 350, and 357 each coordinate [4Fe-4S] cluster.

This sequence belongs to the IspG family. Requires [4Fe-4S] cluster as cofactor.

The enzyme catalyses (2E)-4-hydroxy-3-methylbut-2-enyl diphosphate + oxidized [flavodoxin] + H2O + 2 H(+) = 2-C-methyl-D-erythritol 2,4-cyclic diphosphate + reduced [flavodoxin]. It functions in the pathway isoprenoid biosynthesis; isopentenyl diphosphate biosynthesis via DXP pathway; isopentenyl diphosphate from 1-deoxy-D-xylulose 5-phosphate: step 5/6. Its function is as follows. Converts 2C-methyl-D-erythritol 2,4-cyclodiphosphate (ME-2,4cPP) into 1-hydroxy-2-methyl-2-(E)-butenyl 4-diphosphate. The protein is 4-hydroxy-3-methylbut-2-en-1-yl diphosphate synthase (flavodoxin) of Sinorhizobium medicae (strain WSM419) (Ensifer medicae).